The primary structure comprises 364 residues: Guanine nucleotide-binding protein alpha-8 subunit (364 aa).

The N-myristoyl glycine moiety is linked to residue G2. Residue C5 is the site of S-palmitoyl cysteine attachment. In terms of domain architecture, G-alpha spans 38–364 (KILKLLILGP…QHTMQKVGIQ (327 aa)). The interval 41–54 (KLLILGPGESGKST) is G1 motif. Residues 46–53 (GPGESGKS), 186–192 (LKSRVPT), 211–215 (DVGGQ), 280–283 (NKID), and A336 contribute to the GTP site. Positions 53 and 192 each coordinate Mg(2+). The interval 184–192 (DILKSRVPT) is G2 motif. Residues 207 to 216 (FRIFDVGGQR) form a G3 motif region. A G4 motif region spans residues 276 to 283 (ILFLNKID). The interval 334 to 339 (TCATDT) is G5 motif.

It belongs to the G-alpha family. As to quaternary structure, g proteins are composed of 3 units; alpha, beta and gamma. The alpha chain contains the guanine nucleotide binding site.

Its function is as follows. Guanine nucleotide-binding proteins (G proteins) are involved as modulators or transducers in various transmembrane signaling systems. The sequence is that of Guanine nucleotide-binding protein alpha-8 subunit (gpa-8) from Caenorhabditis elegans.